The chain runs to 325 residues: Acetyl-coenzyme A carboxylase carboxyl transferase subunit alpha (325 aa).

A CoA carboxyltransferase C-terminal domain is found at 43 to 297 (ELENNSTQLR…KTSLIAHLRQ (255 aa)).

The protein belongs to the AccA family. As to quaternary structure, acetyl-CoA carboxylase is a heterohexamer composed of biotin carboxyl carrier protein (AccB), biotin carboxylase (AccC) and two subunits each of ACCase subunit alpha (AccA) and ACCase subunit beta (AccD).

The protein localises to the cytoplasm. The catalysed reaction is N(6)-carboxybiotinyl-L-lysyl-[protein] + acetyl-CoA = N(6)-biotinyl-L-lysyl-[protein] + malonyl-CoA. The protein operates within lipid metabolism; malonyl-CoA biosynthesis; malonyl-CoA from acetyl-CoA: step 1/1. Functionally, component of the acetyl coenzyme A carboxylase (ACC) complex. First, biotin carboxylase catalyzes the carboxylation of biotin on its carrier protein (BCCP) and then the CO(2) group is transferred by the carboxyltransferase to acetyl-CoA to form malonyl-CoA. The polypeptide is Acetyl-coenzyme A carboxylase carboxyl transferase subunit alpha (Cyanothece sp. (strain PCC 7425 / ATCC 29141)).